A 716-amino-acid chain; its full sequence is Polyribonucleotide nucleotidyltransferase (716 aa).

The Mg(2+) site is built by D486 and D492. A KH domain is found at 553–612 (PHIYNIKINPEKIKDVIGKGGAVIRALSDETDTKIDISDDGNITIAALSQKSAAFAQQRI). Positions 622-690 (GRIYQGTVTR…RQGRIRLSIK (69 aa)) constitute an S1 motif domain.

It belongs to the polyribonucleotide nucleotidyltransferase family. In terms of assembly, component of the RNA degradosome, which is a multiprotein complex involved in RNA processing and mRNA degradation. The cofactor is Mg(2+).

It is found in the cytoplasm. It catalyses the reaction RNA(n+1) + phosphate = RNA(n) + a ribonucleoside 5'-diphosphate. In terms of biological role, involved in mRNA degradation. Catalyzes the phosphorolysis of single-stranded polyribonucleotides processively in the 3'- to 5'-direction. The protein is Polyribonucleotide nucleotidyltransferase of Hamiltonella defensa subsp. Acyrthosiphon pisum (strain 5AT).